The chain runs to 125 residues: Probable 4-amino-4-deoxy-L-arabinose-phosphoundecaprenol flippase subunit ArnF (125 aa).

At 1-2 (MG) the chain is on the cytoplasmic side. Residues 3 to 23 (VMWGLISVAIASLAQLSLGFA) form a helical membrane-spanning segment. The Periplasmic segment spans residues 24–33 (MMRLPSIAHP). A helical membrane pass occupies residues 34 to 54 (LAFISGLGALNAATLALFAGL). Topologically, residues 55–76 (AGYLVSVFCWHKTLHTLALSKA) are cytoplasmic. A helical transmembrane segment spans residues 77–97 (YALLSLSYVLVWVASMLLPGL). At 98-100 (QGA) the chain is on the periplasmic side. A helical membrane pass occupies residues 101–121 (FSLKAMLGVLCIMAGVMLIFL). The Cytoplasmic segment spans residues 122–125 (PARS).

It belongs to the ArnF family. Heterodimer of ArnE and ArnF.

The protein localises to the cell inner membrane. Its pathway is bacterial outer membrane biogenesis; lipopolysaccharide biosynthesis. In terms of biological role, translocates 4-amino-4-deoxy-L-arabinose-phosphoundecaprenol (alpha-L-Ara4N-phosphoundecaprenol) from the cytoplasmic to the periplasmic side of the inner membrane. The sequence is that of Probable 4-amino-4-deoxy-L-arabinose-phosphoundecaprenol flippase subunit ArnF from Salmonella agona (strain SL483).